Reading from the N-terminus, the 317-residue chain is Nucleosome assembly protein 1;4 (317 aa).

Residues Leu52–Gln67 carry the Nuclear export signal motif. The Nuclear localization signal motif lies at Lys214–Lys219. The disordered stretch occupies residues Ala297–Asp317. Positions Leu298–Asp317 are enriched in acidic residues.

It belongs to the nucleosome assembly protein (NAP) family. Can form homomeric and heteromeric protein complexes with NAP1;1, NAP1;2 and NAP1;3. Binds histone H2A. As to expression, expressed in the root segment covering the apical end of the differentiation zone, the elongation zone of the root and the mature pollen within the anthers of open flowers.

It localises to the nucleus. The protein resides in the cytoplasm. Its function is as follows. May modulate chromatin structure by regulation of nucleosome assembly/disassembly. The sequence is that of Nucleosome assembly protein 1;4 (NAP1;4) from Arabidopsis thaliana (Mouse-ear cress).